Consider the following 590-residue polypeptide: Phosphate-repressible phosphate permease pho-4 (590 aa).

8 consecutive transmembrane segments (helical) span residues 6-26 (FDYL…NIGA), 44-64 (YLQA…GVGA), 85-105 (ALLM…LTMA), 118-138 (IMGG…VQWV), 149-169 (VFLA…IIFL), 186-206 (FVMV…LLLW), 220-240 (IAGT…IFLM), and 246-266 (IVIL…PLLL). Over 267-466 (RRGEVPPPPA…GALPEKGKAD (200 aa)) the chain is Cytoplasmic. Positions 297–361 (ARRAAQNGDS…PQIKTMVGPR (65 aa)) are disordered. A compositionally biased stretch (polar residues) spans 313 to 322 (VTSSTSNPSA). Positions 325-345 (DGEKGATITKDDSSYSHDHSE) are enriched in basic and acidic residues. A run of 4 helical transmembrane segments spans residues 467-487 (VPVW…WTYG), 506-525 (GFSM…RLKL), 527-547 (VSTT…SGTW), and 561-581 (GWFI…GIII).

It belongs to the inorganic phosphate transporter (PiT) (TC 2.A.20) family.

Its subcellular location is the cell membrane. With respect to regulation, phosphate transport activity is competitively inhibited by vanadate and arsenate. Its function is as follows. High-affinity transporter for external inorganic phosphate. Acts probably as a sodium-phosphate symporter. Component of the high affinity phosphate transport system II (ptsII) necessary for scavenging phosphorus from the environment under conditions of limiting phosphorus. This is Phosphate-repressible phosphate permease pho-4 from Neurospora crassa (strain ATCC 24698 / 74-OR23-1A / CBS 708.71 / DSM 1257 / FGSC 987).